The chain runs to 255 residues: F-box/SPRY domain-containing protein 1 (255 aa).

Residues 3–51 enclose the F-box domain; sequence DPVAALCNYNVLEVIFSYLELEDLSHCSQVCKSWYHFLNDENSDVWRWH. Residues 61–253 enclose the B30.2/SPRY domain; sequence LKSDLLSSVS…VSMVYLGTPL (193 aa).

Belongs to the FBXO45/Fsn family. In terms of assembly, component of an E3 ubiquitin ligase complex composed of hiw and Fsn.

Its subcellular location is the synapse. Its pathway is protein modification; protein ubiquitination. In terms of biological role, required in the presynaptic motoneuron to down-regulate the levels of wnd and restrain synaptic terminal growth at the neuromuscular junction (NMJ). In Drosophila erecta (Fruit fly), this protein is F-box/SPRY domain-containing protein 1.